A 147-amino-acid chain; its full sequence is uncharacterized protein (147 aa).

A run of 4 helical transmembrane segments spans residues 13-33, 45-65, 80-100, and 116-136; these read LSLVFGLLFTVSGIIEIIIGL, LFVGDVFGGLALLAVGIAYFL, YLFTASIIGLGIGVIAFLILI, and WGFFNDLTVYLVLGMLAIIPY.

The protein resides in the cell membrane. This is an uncharacterized protein from Methanocaldococcus jannaschii (strain ATCC 43067 / DSM 2661 / JAL-1 / JCM 10045 / NBRC 100440) (Methanococcus jannaschii).